The sequence spans 1597 residues: MGVPTKISILGRESIVADFGIWRNYVAKDLLNSCSSSTYILISDTNITPLYLDGFQKSFDDAAANLSPKPRLLTYEIPPGESSKSRETKAGIEDWMLTRQPPCGRDTVIIALGGGVIGDLIGFVAATYMRGVRFVQVPTTLLAMVDSSIGGKTAIDTPNGKNLIGAIWQPQRIYLDMEFLNTLPEREFINGMAEVIKTAAISSEEKFAALEDDAEIILAAVKSKNTPERPRFSGIEETLKRTILSSAEFKAQVVSADEREGGLRNLLNFGHSIGHAIEAILAPQVLHGECVAIGMVKEAELARHLGILNNVSVSRISKCLASYGLPTSLKDERIRKLTADKHCSVEQLITYMGVDKKNDGPKKKVVLLSAIGRTHEPRASTVSNEEIQIVLAPSIEVSPGVPKNLNVTCTPPGSKSISNRALVLAALGSGTCRLKNLLHSDDTEVMLNALERLGAATFSWENEGEVLVVNGKGGKMKASPDELYLGNAGTASRFLTTVATLAQKSSVDSSVLTGNARMKQRPIGDLVDALAANGAGVEYLENSGSLPLKIAASGGFAGGEINLAAKVSSQYVSSLLMCAPYAKKPVTLRLVGGKPISQTYIDMTTTMMRSFGIDVKKSETEEHTYHIPLGFYISPAEYIVESDASSSTYPLAVAAITGTSCTVPNIGSKSLQGDARFAVEVLRPMGCTVDQKDFSTTVTGPANGILRPLPNVDMEPMTDAFLTASVLAAVARGGGSNHTTRIFGIANQRVKECNRIKAMKDELAKFGVTCREHDDGLEIDGIDRSTLRHPSDGVYCYDDHRVAMSFSVLSLVAPQPTLILEKECVGKTWPGWWDSLAQTFKVKLDGKEVEKKTGTGGIVHLDKPAASIFIIGMRGAGKTTSGVWVSKALQRPFIDLDDELERTEGMTIPEIIKQRGWEGFREAELSLLRRVMTEKPTGYIFACGGGIVETPEARKLLIQYHKTKGNVILVMRDIKEIMDFLKIDKTRPAYVEDMMSVWLRRKPWYQECSNVQYFSRLTGLDGMAQVLGGFNRFLKVITGQVDSLAQMRSKENTFFVSLTLPDLAPAAPILKEVTLGSDAVELRVDLLKDPQSDSEIPSVDYVAEQISVLRSRTSVPLVFTIRTKAQGGRFPDDAYDAALQLYRLAIRMGSEFVDLEISFPEQLLRTVTEMKGFSKIIASHHDPKGELSWANGSWIQFYNKALQYGDVIKLVGVARSLDDNASLKKFKTWAEEKHDVPIIAINMGDKGQLSRMLNGFMTPVSHPSLPFKAAPGQLSAREIRKGLSLIGEIKSKKFAVIGNPVSASRSPAMHNALFRQMGLPHTYGTLETEDPEIVKKFIRSPDFGGASITIPLKLDIMPLLDEIAPEAVSIGAVNTIVCAPPAPDDQSQAPRLIGRNTDWQGMVRCLSDAGAYPAATPTTTSAGLVIGGGGTARAAIFALQSMGYSPIYVVGRSPDKLSSMTSTFAPDHDIRILEDVKALESLPTVAIGTIPGDKPIEPHMREVLCELFDLCEKANSDAEQARGISTKRILLEMAYKPSVTSLMQLASDSGWTVLPGLEALVAQGVYQCEYWTDITPVYEDARNAVMGVQPKDDDIST.

Positions 1 to 384 (MGVPTKISIL…HEPRASTVSN (384 aa)) are 3-dehydroquinate synthase. Residues 44 to 46 (DTN), 81 to 84 (ESSK), 114 to 116 (GGV), and D119 contribute to the NAD(+) site. 7-phospho-2-dehydro-3-deoxy-D-arabino-heptonate is bound at residue R130. Position 139–140 (139–140 (TT)) interacts with NAD(+). 2 residues coordinate 7-phospho-2-dehydro-3-deoxy-D-arabino-heptonate: D146 and K152. NAD(+) is bound at residue K161. N162 contacts 7-phospho-2-dehydro-3-deoxy-D-arabino-heptonate. Residues 179–182 (FLNT) and N190 contribute to the NAD(+) site. E194 is a binding site for Zn(2+). Residues 194 to 197 (EVIK) and K250 contribute to the 7-phospho-2-dehydro-3-deoxy-D-arabino-heptonate site. E260 serves as the catalytic Proton acceptor; for 3-dehydroquinate synthase activity. Residues 264–268 (RNLLN) and H271 contribute to the 7-phospho-2-dehydro-3-deoxy-D-arabino-heptonate site. Residue H271 coordinates Zn(2+). H275 acts as the Proton acceptor; for 3-dehydroquinate synthase activity in catalysis. The 7-phospho-2-dehydro-3-deoxy-D-arabino-heptonate site is built by H287 and K356. Residue H287 participates in Zn(2+) binding. An EPSP synthase region spans residues 397–842 (VSPGVPKNLN…WDSLAQTFKV (446 aa)). The For EPSP synthase activity role is filled by C824. The shikimate kinase stretch occupies residues 866–1057 (ASIFIIGMRG…RSKENTFFVS (192 aa)). Residue 872 to 879 (GMRGAGKT) coordinates ATP. A 3-dehydroquinase region spans residues 1058-1278 (LTLPDLAPAA…AAPGQLSARE (221 aa)). The active-site Proton acceptor; for 3-dehydroquinate dehydratase activity is H1181. K1209 serves as the catalytic Schiff-base intermediate with substrate; for 3-dehydroquinate dehydratase activity. The tract at residues 1291 to 1597 (SKKFAVIGNP…VQPKDDDIST (307 aa)) is shikimate dehydrogenase.

It in the N-terminal section; belongs to the sugar phosphate cyclases superfamily. Dehydroquinate synthase family. In the 2nd section; belongs to the EPSP synthase family. This sequence in the 3rd section; belongs to the shikimate kinase family. The protein in the 4th section; belongs to the type-I 3-dehydroquinase family. It in the C-terminal section; belongs to the shikimate dehydrogenase family. In terms of assembly, homodimer. Requires Zn(2+) as cofactor.

The protein resides in the cytoplasm. The catalysed reaction is 7-phospho-2-dehydro-3-deoxy-D-arabino-heptonate = 3-dehydroquinate + phosphate. It catalyses the reaction 3-dehydroquinate = 3-dehydroshikimate + H2O. It carries out the reaction shikimate + NADP(+) = 3-dehydroshikimate + NADPH + H(+). The enzyme catalyses shikimate + ATP = 3-phosphoshikimate + ADP + H(+). The catalysed reaction is 3-phosphoshikimate + phosphoenolpyruvate = 5-O-(1-carboxyvinyl)-3-phosphoshikimate + phosphate. It participates in metabolic intermediate biosynthesis; chorismate biosynthesis; chorismate from D-erythrose 4-phosphate and phosphoenolpyruvate: step 2/7. It functions in the pathway metabolic intermediate biosynthesis; chorismate biosynthesis; chorismate from D-erythrose 4-phosphate and phosphoenolpyruvate: step 3/7. The protein operates within metabolic intermediate biosynthesis; chorismate biosynthesis; chorismate from D-erythrose 4-phosphate and phosphoenolpyruvate: step 4/7. Its pathway is metabolic intermediate biosynthesis; chorismate biosynthesis; chorismate from D-erythrose 4-phosphate and phosphoenolpyruvate: step 5/7. It participates in metabolic intermediate biosynthesis; chorismate biosynthesis; chorismate from D-erythrose 4-phosphate and phosphoenolpyruvate: step 6/7. Its function is as follows. The AROM polypeptide catalyzes 5 consecutive enzymatic reactions in prechorismate polyaromatic amino acid biosynthesis. The chain is Pentafunctional AROM polypeptide from Blastomyces gilchristii (strain SLH14081) (Blastomyces dermatitidis).